An 819-amino-acid chain; its full sequence is Pentatricopeptide repeat-containing protein At5g02860 (819 aa).

Residues 57 to 93 (QNPNSRQPISSQTSRNRNRTRIGKSRDPNLGKPWSYH) are disordered. PPR repeat units lie at residues 172–206 (DNSVVAIIISMLGKEGRVSSAANMFNGLQEDGFSL), 207–241 (DVYSYTSLISAFANSGRYREAVNVFKKMEEDGCKP), 242–277 (TLITYNVILNVFGKMGTPWNKITSLVEKMKSDGIAP), 278–312 (DAYTYNTLITCCKRGSLHQEAAQVFEEMKAAGFSY), 313–347 (DKVTYNALLDVYGKSHRPKEAMKVLNEMVLNGFSP), 348–382 (SIVTYNSLISAYARDGMLDEAMELKNQMAEKGTKP), 383–417 (DVFTYTTLLSGFERAGKVESAMSIFEEMRNAGCKP), 418–452 (NICTFNAFIKMYGNRGKFTEMMKIFDEINVCGLSP), 453–487 (DIVTWNTLLAVFGQNGMDSEVSGVFKEMKRAGFVP), 488–522 (ERETFNTLISAYSRCGSFEQAMTVYRRMLDAGVTP), 523–557 (DLSTYNTVLAALARGGMWEQSEKVLAEMEDGRCKP), 558–592 (NELTYCSLLHAYANGKEIGLMHSLAEEVYSGVIEP), 593–627 (RAVLLKTLVLVCSKCDLLPEAERAFSELKERGFSP), 628–662 (DITTLNSMVSIYGRRQMVAKANGVLDYMKERGFTP), 663–697 (SMATYNSLMYMHSRSADFGKSEEILREILAKGIKP), 698–732 (DIISYNTVIYAYCRNTRMRDASRIFSEMRNSGIVP), 733–767 (DVITYNTFIGSYAADSMFEEAIGVVRYMIKHGCRP), and 768–802 (NQNTYNSIVDGYCKLNRKDEAKLFVEDLRNLDPHA).

It belongs to the PPR family. P subfamily.

This is Pentatricopeptide repeat-containing protein At5g02860 from Arabidopsis thaliana (Mouse-ear cress).